Here is a 1170-residue protein sequence, read N- to C-terminus: Thrombospondin-1 (1170 aa).

An N-terminal signal peptide occupies residues 1–18 (MELLRGLGVLFLLHMCGS). The tract at residues 47–95 (RLVKGQDLSSPAFRIENANLIPAVPDDKFQDLLDAVWADKGFIFLASLR) is heparin-binding. Residues 56-270 (SPAFRIENAN…HKTKDLQAIC (215 aa)) form the Laminin G-like domain. Cys171 and Cys232 are joined by a disulfide. N-linked (GlcNAc...) asparagine glycosylation is found at Asn248 and Asn360. One can recognise a VWFC domain in the interval 316-373 (PLCFHNGVQYKNNEEWTVDSCTECHCQNSVTICKKVSCPIMPCSNATVPDGECCPRCW). TSP type-1 domains are found at residues 379–429 (DDGW…QECD), 435–490 (DGGW…DACP), and 492–547 (NGGW…QDCP). The C-linked (Man) tryptophan glycan is linked to Trp385. 3 disulfides stabilise this stretch: Cys391–Cys423, Cys395–Cys428, and Cys406–Cys413. Residues Trp438 and Trp441 are each glycosylated (C-linked (Man) tryptophan). 3 disulfides stabilise this stretch: Cys447/Cys484, Cys451/Cys489, and Cys462/Cys474. Thr450 carries an O-linked (Fuc...) threonine glycan. The C-linked (Man) tryptophan glycan is linked to Trp498. Cystine bridges form between Cys504–Cys541, Cys508–Cys546, Cys519–Cys531, Cys551–Cys562, Cys556–Cys572, Cys575–Cys586, Cys592–Cys608, Cys599–Cys617, Cys620–Cys644, Cys650–Cys663, Cys657–Cys676, Cys678–Cys689, Cys705–Cys713, Cys718–Cys738, Cys754–Cys774, Cys777–Cys797, Cys813–Cys833, Cys836–Cys856, Cys874–Cys894, Cys910–Cys930, and Cys946–Cys1167. Thr507 carries an O-linked (Fuc...) threonine glycan. The segment at 531–1152 (CVGDVTENQV…YAGGRLGLFV (622 aa)) is involved in retention in extracellular matrix (ECM); involved in trimer formation. The EGF-like 1 domain maps to 547-587 (PIDGCLSNPCFAGAKCTSYPDGSWKCGACPPGYSGNGIQCK). A glycan (O-linked (Xyl) serine) is linked at Ser553. One can recognise an EGF-like 2 domain in the interval 646 to 690 (PRNPCTDGTHDCNKNAKCNYLGHYSDPMYRCECKPGYAGNGIICG). 8 TSP type-3 repeats span residues 691–726 (EDTDLDGWPNENLVCVANATYHCKKDNCPNLPNSGQ), 727–762 (EDYDKDGIGDACDDDDDNDKIPDDRDNCPFHYNPAQ), 763–785 (YDYDRDDVGDRCDNCPYNHNPDQ), 786–821 (ADTDKNGEGDACAVDIDGDGILNERDNCQYVYNVDQ), 822–844 (RDTDMDGVGDQCDNCPLEHNPDQ), 845–882 (LDSDSDLIGDTCDNNQDIDEDGHQNNLDNCPYVPNANQ), 883–918 (ADHDKDGKGDACDHDDDNDGIPDDRDNCRLVPNPDQ), and 919–954 (KDSDGDGRGDACKDDFDHDNVPDIDDICPENFDISE). Asn708 is a glycosylation site (N-linked (GlcNAc...) asparagine). The disordered stretch occupies residues 840-934 (HNPDQLDSDS…GRGDACKDDF (95 aa)). Composition is skewed to basic and acidic residues over residues 883–894 (ADHDKDGKGDAC) and 917–934 (DQKDSDGDGRGDACKDDF). The Cell attachment site motif lies at 926 to 928 (RGD). The TSP C-terminal domain occupies 958 to 1170 (RRFQMIPLDP…SDMKYECRDS (213 aa)). Asn1067 carries an N-linked (GlcNAc...) asparagine glycan.

Belongs to the thrombospondin family. Homotrimer; disulfide-linked. Can bind to fibrinogen, fibronectin, laminin, type V collagen and integrins alpha-V/beta-1, alpha-V/beta-3 and alpha-IIb/beta-3. Binds heparin. Interacts (via the C-terminal domain) with CD47. Interacts (via the TSP type I repeats) with CD36; the interaction conveys an antiangiogenic effect. Interacts (via the TSP type I repeats) with HRG; the interaction blocks the antiangiogenic effect of THBS1 with CD36. Interacts with ATF6 (via lumenal domain). Interacts with FN1; this interaction is enhanced by TNFAIP6, which may act as a bridging molecule between FN1 and THBS1. Interacts with SIRPA; the interaction stimulates phosphorylation of SIRPA.

It is found in the secreted. The protein resides in the cell surface. It localises to the extracellular space. Its subcellular location is the extracellular matrix. The protein localises to the endoplasmic reticulum. It is found in the sarcoplasmic reticulum. Functionally, adhesive glycoprotein that mediates cell-to-cell and cell-to-matrix interactions. Multifunctional, involved in inflammation, angiogenesis, wound healing, reactive oxygen species (ROS) signaling, nitrous oxide (NO) signaling, apoptosis, senescence, aging, cellular self-renewal, stemness, and cardiovascular and metabolic homeostasis. Negatively modulates dendritic cell activation and cytokine release, as part of an autocrine feedback loop, contributing to the resolution of inflammation and immune homeostasis. Ligand for receptor CD47. Modulates nitrous oxide (NO) signaling via CD47, hence playing a role as a pressor agent, supporting blood pressure. Plays a role in endothelial cell senescence, acting via CD47, by increasing the abundance and activation of NADPH oxidase NOX1, and so generating excess ROS. Inhibits stem cell self-renewal, acting via CD47 signaling, probably by regulation of the stem cell transcription factors POU5F1/OCT4, SOX2, MYC/c-Myc and KLF4. Negatively modulates wound healing, acting via CD47. Ligand for receptor CD36. Involved in inducing apoptosis in podocytes in response to elevated free fatty acids, acting via CD36. Plays a role in suppressing angiogenesis, acting, depending on context, via CD36 or CD47. Promotes cellular senescence in a TP53-CDKN1A-RB1 signaling-dependent manner. Ligand for immunoglobulin-like cell surface receptor SIRPA. Involved in ROS signaling in non-phagocytic cells, stimulating NADPH oxidase-derived ROS production, acting via interaction with SIRPA. Plays a role in metabolic dysfunction in diet-induced obesity, perhaps acting by exacerbating adipose inflammatory activity; its effects may be mediated, at least in part, through enhanced adipocyte proliferation. Plays a role in ER stress response, via its interaction with the activating transcription factor 6 alpha (ATF6) which produces adaptive ER stress response factors. May be involved in age-related conditions, including metabolic dysregulation, during normal aging. The protein is Thrombospondin-1 (Thbs1) of Mus musculus (Mouse).